The chain runs to 522 residues: ATP synthase subunit alpha 2 (522 aa).

G176–T183 serves as a coordination point for ATP.

The protein belongs to the ATPase alpha/beta chains family. As to quaternary structure, F-type ATPases have 2 components, CF(1) - the catalytic core - and CF(0) - the membrane proton channel. CF(1) has five subunits: alpha(3), beta(3), gamma(1), delta(1), epsilon(1). CF(0) has three main subunits: a(1), b(2) and c(9-12). The alpha and beta chains form an alternating ring which encloses part of the gamma chain. CF(1) is attached to CF(0) by a central stalk formed by the gamma and epsilon chains, while a peripheral stalk is formed by the delta and b chains.

The protein resides in the cell inner membrane. The enzyme catalyses ATP + H2O + 4 H(+)(in) = ADP + phosphate + 5 H(+)(out). Functionally, produces ATP from ADP in the presence of a proton gradient across the membrane. The alpha chain is a regulatory subunit. The sequence is that of ATP synthase subunit alpha 2 from Syntrophotalea carbinolica (strain DSM 2380 / NBRC 103641 / GraBd1) (Pelobacter carbinolicus).